Consider the following 300-residue polypeptide: MNSGVRMVTRSRSRATRIASEGCREELAPREAAAEGRKSHRPVRHPRRTQKTHVAYEAANGEEGEDAEPLKVPVWEPQNWQQQLANIRIMRSKKDAPVDQLGAEHCYDASASPKVRRYQVLLSLMLSSQTKDQVTAGAMQRLRARGLTVESILQTDDDTLGRLIYPVGFWRNKVKYIKQTTAILQQRYEGDIPASVAELVALPGVGPKMAHLAMAVAWGTISGIAVDTHVHRIANRLRWTKKMTKTPEETRKNLEEWLPRVLWSEVNGLLVGFGQQICLPVHPRCQACLNKALCPAAQDL.

The transit peptide at 1 to 19 directs the protein to the mitochondrion; that stretch reads MNSGVRMVTRSRSRATRIA. Positions 1–53 are disordered; that stretch reads MNSGVRMVTRSRSRATRIASEGCREELAPREAAAEGRKSHRPVRHPRRTQKTH. The segment covering 22–37 has biased composition (basic and acidic residues); that stretch reads GCREELAPREAAAEGR. The span at 38–51 shows a compositional bias: basic residues; it reads KSHRPVRHPRRTQK. Residues 187–211 form the HhH domain; sequence RYEGDIPASVAELVALPGVGPKMAH. Lys-208 functions as the Nucleophile; for N-glycosylase activity in the catalytic mechanism. 4 residues coordinate [4Fe-4S] cluster: Cys-278, Cys-285, Cys-288, and Cys-294.

This sequence belongs to the Nth/MutY family. Interacts with YBX1. Interacts with ERCC5/XPG; the interaction stimulates NTHL1 activity and NTHL1 binding to its DNA substrate. The cofactor is [4Fe-4S] cluster. Post-translationally, ubiquitinated by TRIM26; leading to proteasomal degradation. Widely expressed.

Its subcellular location is the nucleus. The protein resides in the mitochondrion. The enzyme catalyses 2'-deoxyribonucleotide-(2'-deoxyribose 5'-phosphate)-2'-deoxyribonucleotide-DNA = a 3'-end 2'-deoxyribonucleotide-(2,3-dehydro-2,3-deoxyribose 5'-phosphate)-DNA + a 5'-end 5'-phospho-2'-deoxyribonucleoside-DNA + H(+). Its function is as follows. Bifunctional DNA N-glycosylase with associated apurinic/apyrimidinic (AP) lyase function that catalyzes the first step in base excision repair (BER), the primary repair pathway for the repair of oxidative DNA damage. The DNA N-glycosylase activity releases the damaged DNA base from DNA by cleaving the N-glycosidic bond, leaving an AP site. The AP lyase activity cleaves the phosphodiester bond 3' to the AP site by a beta-elimination. Primarily recognizes and repairs oxidative base damage of pyrimidines. This is Endonuclease III-like protein 1 (Nthl1) from Mus musculus (Mouse).